A 215-amino-acid chain; its full sequence is 3-demethoxyubiquinol 3-hydroxylase (215 aa).

Positions 64, 94, 97, 146, 178, and 181 each coordinate Fe cation.

It belongs to the COQ7 family. It depends on Fe cation as a cofactor.

Its subcellular location is the cell membrane. The catalysed reaction is a 5-methoxy-2-methyl-3-(all-trans-polyprenyl)benzene-1,4-diol + AH2 + O2 = a 3-demethylubiquinol + A + H2O. It functions in the pathway cofactor biosynthesis; ubiquinone biosynthesis. Its function is as follows. Catalyzes the hydroxylation of 2-nonaprenyl-3-methyl-6-methoxy-1,4-benzoquinol during ubiquinone biosynthesis. This chain is 3-demethoxyubiquinol 3-hydroxylase, found in Azotobacter vinelandii (strain DJ / ATCC BAA-1303).